The sequence spans 70 residues: Drosomycin (70 aa).

An N-terminal signal peptide occupies residues 1–20; it reads MMQIKYLFALFAVLMLVVLG. Positions 21-26 are excised as a propeptide; it reads ANEADA. 4 disulfides stabilise this stretch: Cys-28/Cys-70, Cys-37/Cys-59, Cys-45/Cys-65, and Cys-49/Cys-67. The N-linked (GlcNAc...) asparagine glycan is linked to Asn-42.

As to expression, hemolymph (at protein level). Synthesized in the fat body and is secreted into the blood. In larvae, expressed in the visceral branches and posterior spiracles of the trachea.

The protein resides in the secreted. In terms of biological role, possesses antifungal activity and is active against a relatively broad spectrum of filamentous fungi. It inhibits spore germination at high concentrations and at low concentrations delays growth of hyphae which subsequently exhibit abnormal morphology. Spz C-106 in the hemolymph controls expression of the antifungal peptide by acting as a ligand of Tl and inducing an intracellular signaling pathway. Part of a psh-dependent Toll pathway, which may function in activating the systematic immune response in response to localized melanization of the tracheal system. This Drosophila melanogaster (Fruit fly) protein is Drosomycin (Drs).